The primary structure comprises 194 residues: Protein GrpE (194 aa).

The protein belongs to the GrpE family. In terms of assembly, homodimer.

It localises to the cytoplasm. In terms of biological role, participates actively in the response to hyperosmotic and heat shock by preventing the aggregation of stress-denatured proteins, in association with DnaK and GrpE. It is the nucleotide exchange factor for DnaK and may function as a thermosensor. Unfolded proteins bind initially to DnaJ; upon interaction with the DnaJ-bound protein, DnaK hydrolyzes its bound ATP, resulting in the formation of a stable complex. GrpE releases ADP from DnaK; ATP binding to DnaK triggers the release of the substrate protein, thus completing the reaction cycle. Several rounds of ATP-dependent interactions between DnaJ, DnaK and GrpE are required for fully efficient folding. The chain is Protein GrpE from Aliivibrio salmonicida (strain LFI1238) (Vibrio salmonicida (strain LFI1238)).